Here is a 673-residue protein sequence, read N- to C-terminus: Probable multidrug resistance ABC transporter ATP-binding/permease protein YheH (673 aa).

A run of 5 helical transmembrane segments spans residues 18–38 (LITAVLLLTVAVGAELTGPFI), 146–166 (IKGMVLLICLYGGLLVFSVFF), 223–243 (LYVTVLSTFVTSGIYMFGIFT), 245–265 (LFLLDVKLAFVCLAIVPIIWL), and 347–367 (LAFVCLIWHFGGASLNAAGIV). The ABC transmembrane type-1 domain occupies 18-398 (LITAVLLLTV…IVNQFSKLEL (381 aa)). The ABC transporter domain maps to 430–664 (VEFRDVSFAY…EGQYYQMYEL (235 aa)). Residue 463-470 (GHTGSGKS) coordinates ATP.

Belongs to the ABC transporter superfamily. In terms of assembly, heterodimer composed of YheH and YheI.

The protein resides in the cell membrane. Inhibited by ortho-vanadate. Functionally, involved in the transport of four structurally unrelated drugs, including doxorubicin and mitoxantrone. Transmembrane domains (TMD) form a pore in the membrane and the ATP-binding domain (NBD) is responsible for energy generation. The chain is Probable multidrug resistance ABC transporter ATP-binding/permease protein YheH (yheH) from Bacillus subtilis (strain 168).